A 480-amino-acid polypeptide reads, in one-letter code: Siroheme synthase 2 (480 aa).

Residues 1–202 (MDYLPMFARL…QDWQSAETWL (202 aa)) form a precorrin-2 dehydrogenase /sirohydrochlorin ferrochelatase region. Residues 22 to 23 (EV) and 43 to 44 (PE) each bind NAD(+). Ser-126 carries the post-translational modification Phosphoserine. Residues 214 to 480 (GEVVLVGAGP…GCDLKLVNLA (267 aa)) are uroporphyrinogen-III C-methyltransferase. Pro-223 serves as a coordination point for S-adenosyl-L-methionine. The active-site Proton acceptor is Asp-246. The active-site Proton donor is Lys-268. Residues 299 to 301 (GGD), 329 to 330 (TA), Met-381, and Gly-410 each bind S-adenosyl-L-methionine.

This sequence in the N-terminal section; belongs to the precorrin-2 dehydrogenase / sirohydrochlorin ferrochelatase family. It in the C-terminal section; belongs to the precorrin methyltransferase family.

It carries out the reaction uroporphyrinogen III + 2 S-adenosyl-L-methionine = precorrin-2 + 2 S-adenosyl-L-homocysteine + H(+). The enzyme catalyses precorrin-2 + NAD(+) = sirohydrochlorin + NADH + 2 H(+). The catalysed reaction is siroheme + 2 H(+) = sirohydrochlorin + Fe(2+). The protein operates within cofactor biosynthesis; adenosylcobalamin biosynthesis; precorrin-2 from uroporphyrinogen III: step 1/1. Its pathway is cofactor biosynthesis; adenosylcobalamin biosynthesis; sirohydrochlorin from precorrin-2: step 1/1. It participates in porphyrin-containing compound metabolism; siroheme biosynthesis; precorrin-2 from uroporphyrinogen III: step 1/1. It functions in the pathway porphyrin-containing compound metabolism; siroheme biosynthesis; siroheme from sirohydrochlorin: step 1/1. The protein operates within porphyrin-containing compound metabolism; siroheme biosynthesis; sirohydrochlorin from precorrin-2: step 1/1. Its function is as follows. Multifunctional enzyme that catalyzes the SAM-dependent methylations of uroporphyrinogen III at position C-2 and C-7 to form precorrin-2 via precorrin-1. Then it catalyzes the NAD-dependent ring dehydrogenation of precorrin-2 to yield sirohydrochlorin. Finally, it catalyzes the ferrochelation of sirohydrochlorin to yield siroheme. The polypeptide is Siroheme synthase 2 (Aeromonas salmonicida (strain A449)).